The primary structure comprises 34 residues: MAATVVSGAQVAIAFVVALIAGIAALLLSTALGK.

The chain crosses the membrane as a helical span at residues 11–31; that stretch reads VAIAFVVALIAGIAALLLSTA.

Belongs to the PsaM family. In terms of assembly, the G.violaceus PSI reaction center is composed of one copy each of PsaA,B,C,D,E,F,L,M and Z, and forms trimeric complexes.

It is found in the cell inner membrane. This is Photosystem I reaction center subunit XII from Gloeobacter violaceus (strain ATCC 29082 / PCC 7421).